The following is a 42-amino-acid chain: ESIPFSETRGYVKNVLAYDAYYRHFMGEKDALMSDAEWQRRY.

Belongs to the transglycosylase Slt family.

The protein resides in the periplasm. The enzyme catalyses Exolytic cleavage of the (1-&gt;4)-beta-glycosidic linkage between N-acetylmuramic acid (MurNAc) and N-acetylglucosamine (GlcNAc) residues in peptidoglycan, from either the reducing or the non-reducing ends of the peptidoglycan chains, with concomitant formation of a 1,6-anhydrobond in the MurNAc residue.. Murein-degrading enzyme. Catalyzes the cleavage of the glycosidic bonds between N-acetylmuramic acid and N-acetylglucosamine residues in peptidoglycan. May play a role in recycling of muropeptides during cell elongation and/or cell division. The protein is Soluble lytic murein transglycosylase (slt) of Enterobacter cloacae.